Consider the following 688-residue polypeptide: Polyribonucleotide nucleotidyltransferase (688 aa).

Mg(2+)-binding residues include Asp484 and Asp490. The region spanning 550–609 (PTTEIFNVAPDKIVEIIGQGGRVIKEIVEKFEVKIDLNKPSGEVKIMGNKERVLKTKEFI) is the KH domain. The S1 motif domain maps to 626 to 688 (DEVLEAQVKR…NKGKIALDLA (63 aa)).

It belongs to the polyribonucleotide nucleotidyltransferase family. It depends on Mg(2+) as a cofactor.

The protein localises to the cytoplasm. It carries out the reaction RNA(n+1) + phosphate = RNA(n) + a ribonucleoside 5'-diphosphate. In terms of biological role, involved in mRNA degradation. Catalyzes the phosphorolysis of single-stranded polyribonucleotides processively in the 3'- to 5'-direction. In Helicobacter pylori (strain ATCC 700392 / 26695) (Campylobacter pylori), this protein is Polyribonucleotide nucleotidyltransferase.